We begin with the raw amino-acid sequence, 880 residues long: DNA mismatch repair protein MutS (880 aa).

605–612 (GPNMSGKS) serves as a coordination point for ATP. The tract at residues 790–829 (QETAAVPSRGVEPPAPVIEPTPAKEQTPVKEQTTPLVEES) is disordered. Residues 818–829 (VKEQTTPLVEES) show a composition bias toward polar residues.

It belongs to the DNA mismatch repair MutS family.

In terms of biological role, this protein is involved in the repair of mismatches in DNA. It is possible that it carries out the mismatch recognition step. This protein has a weak ATPase activity. The protein is DNA mismatch repair protein MutS of Limosilactobacillus fermentum (strain NBRC 3956 / LMG 18251) (Lactobacillus fermentum).